Consider the following 96-residue polypeptide: Large ribosomal subunit protein bL28 (96 aa).

Positions methionine 1 to asparagine 22 are enriched in polar residues. The disordered stretch occupies residues methionine 1–lysine 24.

The protein belongs to the bacterial ribosomal protein bL28 family.

The sequence is that of Large ribosomal subunit protein bL28 from Sinorhizobium medicae (strain WSM419) (Ensifer medicae).